Reading from the N-terminus, the 509-residue chain is Poly(A) RNA polymerase GLD2-A (509 aa).

The tract at residues 88–107 is disordered; that stretch reads PGSPSSSFQNRKRRSDEGNV. Residues aspartate 240 and aspartate 242 each coordinate Mg(2+). Positions 409–462 constitute a PAP-associated domain; the sequence is LGDLLLGFLKYFAVEFDWSKDIISVREGKALPRSDDYLWRNKYICVEEPFDGTN.

This sequence belongs to the DNA polymerase type-B-like family. GLD2 subfamily. As to quaternary structure, component of a complex at least composed of cpeb1, cpsf1, tent2/gld2, pabpc1/ePAB, parn and sympk. Following oocyte maturation, parn is expelled from the complex. Interacts with rbfox2 and sympk. Mg(2+) serves as cofactor. The cofactor is Mn(2+).

It is found in the cytoplasm. The enzyme catalyses RNA(n) + ATP = RNA(n)-3'-adenine ribonucleotide + diphosphate. Its function is as follows. Cytoplasmic poly(A) RNA polymerase that adds successive AMP monomers to the 3'-end of specific RNAs, forming a poly(A) tail. In contrast to the canonical nuclear poly(A) RNA polymerase, it only adds poly(A) to selected cytoplasmic mRNAs during oocyte maturation. Plays a central role during oocyte maturation by mediating polyadenylation of dormant mRNAs, which contain 5'AAUAAA-3' sequence in their 3'UTR. In immature oocytes, polyadenylation of poly(A) tails is counteracted by the ribonuclease parn. During maturation parn is excluded from the ribonucleoprotein complex, allowing poly(A) elongation and activation of mRNAs. May not play a role in replication-dependent histone mRNA degradation. The chain is Poly(A) RNA polymerase GLD2-A (tent2-a) from Xenopus laevis (African clawed frog).